The chain runs to 103 residues: MYAVFQSGGKQHRVAEGHTVRLEKLEVATGETIEFDQVLLIADGETVHVGAPLVAGGKVVAEVVSHGRGDKVTIVKFRRRKHHDKKMGHRQWFTEVKITAINA.

This sequence belongs to the bacterial ribosomal protein bL21 family. Part of the 50S ribosomal subunit. Contacts protein L20.

This protein binds to 23S rRNA in the presence of protein L20. The sequence is that of Large ribosomal subunit protein bL21 from Shewanella baltica (strain OS223).